Consider the following 924-residue polypeptide: Ubiquitin carboxyl-terminal hydrolase 5 (924 aa).

Positions 15 to 145 (LSPEEERVFI…GPTLARRVIS (131 aa)) constitute a DUSP domain. The span at 64-83 (TNDGSSLSEHCDSPGSSTLK) shows a compositional bias: polar residues. The disordered stretch occupies residues 64–87 (TNDGSSLSEHCDSPGSSTLKKPSR). In terms of domain architecture, USP spans 317-916 (TGLLNLGNTC…AAYVLFYRRK (600 aa)). Cys326 (nucleophile) is an active-site residue. The segment covering 648–667 (REESVGKKGNSDSSIPERRS) has biased composition (basic and acidic residues). A disordered region spans residues 648-690 (REESVGKKGNSDSSIPERRSARFNNTEEEDKVGGLKKAKKSNS). Catalysis depends on His874, which acts as the Proton acceptor.

Belongs to the peptidase C19 family.

It catalyses the reaction Thiol-dependent hydrolysis of ester, thioester, amide, peptide and isopeptide bonds formed by the C-terminal Gly of ubiquitin (a 76-residue protein attached to proteins as an intracellular targeting signal).. Recognizes and hydrolyzes the peptide bond at the C-terminal Gly of ubiquitin. Involved in the processing of poly-ubiquitin precursors as well as that of ubiquitinated proteins. In Arabidopsis thaliana (Mouse-ear cress), this protein is Ubiquitin carboxyl-terminal hydrolase 5 (UBP5).